A 421-amino-acid chain; its full sequence is Testin (421 aa).

Residues 92 to 199 (MILTNPVAAK…GDVKLPCEMD (108 aa)) enclose the PET domain. 3 consecutive LIM zinc-binding domains span residues 234 to 297 (YSCY…CDSE), 299 to 359 (PRCA…NHAV), and 362 to 421 (QGCH…KRMS).

It belongs to the prickle / espinas / testin family. Interacts via LIM domain 1 with ZYX. Interacts (via LIM domain 3) with ENAH and VASP. Interacts with ALKBH4, talin, actin, alpha-actinin, GRIP1 and PXN. Interacts (via LIM domain 2) with ACTL7A (via N-terminus). Heterodimer with ACTL7A; the heterodimer interacts with ENAH to form a heterotrimer.

The protein resides in the cytoplasm. It is found in the cell junction. It localises to the focal adhesion. Functionally, scaffold protein that may play a role in cell adhesion, cell spreading and in the reorganization of the actin cytoskeleton. Plays a role in the regulation of cell proliferation. May act as a tumor suppressor. The polypeptide is Testin (TES) (Nomascus leucogenys (Northern white-cheeked gibbon)).